The following is an 84-amino-acid chain: Exodeoxyribonuclease 7 small subunit (84 aa).

Belongs to the XseB family. Heterooligomer composed of large and small subunits.

It localises to the cytoplasm. The catalysed reaction is Exonucleolytic cleavage in either 5'- to 3'- or 3'- to 5'-direction to yield nucleoside 5'-phosphates.. Bidirectionally degrades single-stranded DNA into large acid-insoluble oligonucleotides, which are then degraded further into small acid-soluble oligonucleotides. The sequence is that of Exodeoxyribonuclease 7 small subunit from Herminiimonas arsenicoxydans.